The following is a 429-amino-acid chain: Phosphoglucosamine mutase (429 aa).

Serine 96 serves as the catalytic Phosphoserine intermediate. Mg(2+) is bound by residues serine 96, aspartate 230, aspartate 232, and aspartate 234. Serine 96 carries the phosphoserine modification.

This sequence belongs to the phosphohexose mutase family. Mg(2+) is required as a cofactor. Post-translationally, activated by phosphorylation.

It carries out the reaction alpha-D-glucosamine 1-phosphate = D-glucosamine 6-phosphate. Its function is as follows. Catalyzes the conversion of glucosamine-6-phosphate to glucosamine-1-phosphate. The chain is Phosphoglucosamine mutase from Thermotoga petrophila (strain ATCC BAA-488 / DSM 13995 / JCM 10881 / RKU-1).